A 128-amino-acid chain; its full sequence is uncharacterized protein (128 aa).

Residues 5 to 128 form the VOC domain; that stretch reads SIHHIAIICS…DQLPLELYEQ (124 aa). A divalent metal cation is bound by residues H8, E56, H77, and E124.

This is an uncharacterized protein from Bacillus subtilis (strain 168).